The sequence spans 511 residues: ATP synthase subunit alpha (511 aa).

170 to 177 (GDRQTGKT) is an ATP binding site.

The protein belongs to the ATPase alpha/beta chains family. As to quaternary structure, F-type ATPases have 2 components, CF(1) - the catalytic core - and CF(0) - the membrane proton channel. CF(1) has five subunits: alpha(3), beta(3), gamma(1), delta(1), epsilon(1). CF(0) has three main subunits: a(1), b(2) and c(9-12). The alpha and beta chains form an alternating ring which encloses part of the gamma chain. CF(1) is attached to CF(0) by a central stalk formed by the gamma and epsilon chains, while a peripheral stalk is formed by the delta and b chains.

The protein localises to the cell inner membrane. The enzyme catalyses ATP + H2O + 4 H(+)(in) = ADP + phosphate + 5 H(+)(out). Functionally, produces ATP from ADP in the presence of a proton gradient across the membrane. The alpha chain is a regulatory subunit. This is ATP synthase subunit alpha from Granulibacter bethesdensis (strain ATCC BAA-1260 / CGDNIH1).